Consider the following 217-residue polypeptide: Phosphatidylserine decarboxylase proenzyme (217 aa).

The active-site Schiff-base intermediate with substrate; via pyruvic acid is Ser183. Ser183 carries the pyruvic acid (Ser); by autocatalysis modification.

It belongs to the phosphatidylserine decarboxylase family. PSD-A subfamily. In terms of assembly, heterodimer of a large membrane-associated beta subunit and a small pyruvoyl-containing alpha subunit. Pyruvate serves as cofactor. Post-translationally, is synthesized initially as an inactive proenzyme. Formation of the active enzyme involves a self-maturation process in which the active site pyruvoyl group is generated from an internal serine residue via an autocatalytic post-translational modification. Two non-identical subunits are generated from the proenzyme in this reaction, and the pyruvate is formed at the N-terminus of the alpha chain, which is derived from the carboxyl end of the proenzyme. The post-translation cleavage follows an unusual pathway, termed non-hydrolytic serinolysis, in which the side chain hydroxyl group of the serine supplies its oxygen atom to form the C-terminus of the beta chain, while the remainder of the serine residue undergoes an oxidative deamination to produce ammonia and the pyruvoyl prosthetic group on the alpha chain.

It localises to the cell membrane. The catalysed reaction is a 1,2-diacyl-sn-glycero-3-phospho-L-serine + H(+) = a 1,2-diacyl-sn-glycero-3-phosphoethanolamine + CO2. It participates in phospholipid metabolism; phosphatidylethanolamine biosynthesis; phosphatidylethanolamine from CDP-diacylglycerol: step 2/2. Catalyzes the formation of phosphatidylethanolamine (PtdEtn) from phosphatidylserine (PtdSer). This is Phosphatidylserine decarboxylase proenzyme from Cupriavidus pinatubonensis (strain JMP 134 / LMG 1197) (Cupriavidus necator (strain JMP 134)).